The primary structure comprises 181 residues: ATP synthase subunit b 2 (181 aa).

Low complexity predominate over residues 1-12; that stretch reads MAEGHGTTAHTG. Residues 1 to 20 are disordered; it reads MAEGHGTTAHTGAEGGHKAP. A helical membrane pass occupies residues 33–53; the sequence is LVSLLIAFVALYLIVSKVALP.

Belongs to the ATPase B chain family. As to quaternary structure, F-type ATPases have 2 components, F(1) - the catalytic core - and F(0) - the membrane proton channel. F(1) has five subunits: alpha(3), beta(3), gamma(1), delta(1), epsilon(1). F(0) has three main subunits: a(1), b(2) and c(10-14). The alpha and beta chains form an alternating ring which encloses part of the gamma chain. F(1) is attached to F(0) by a central stalk formed by the gamma and epsilon chains, while a peripheral stalk is formed by the delta and b chains.

The protein resides in the cell inner membrane. F(1)F(0) ATP synthase produces ATP from ADP in the presence of a proton or sodium gradient. F-type ATPases consist of two structural domains, F(1) containing the extramembraneous catalytic core and F(0) containing the membrane proton channel, linked together by a central stalk and a peripheral stalk. During catalysis, ATP synthesis in the catalytic domain of F(1) is coupled via a rotary mechanism of the central stalk subunits to proton translocation. Its function is as follows. Component of the F(0) channel, it forms part of the peripheral stalk, linking F(1) to F(0). The b'-subunit is a diverged and duplicated form of b found in plants and photosynthetic bacteria. This chain is ATP synthase subunit b 2 (atpF2), found in Rhodopseudomonas palustris (strain BisA53).